A 1296-amino-acid chain; its full sequence is Nuclear factor related to kappa-B-binding protein (1296 aa).

The region spanning 39-156 is the DEUBAD domain; that stretch reads PEDLLEDPEI…LKQILASRSD (118 aa). Disordered stretches follow at residues 165-186 and 204-232; these read GPAL…EREW and GDTA…PAVP. Positions 216–232 are enriched in low complexity; sequence SSWLPSSPARSPSPAVP. Phosphoserine occurs at positions 228 and 298. Residue K327 forms a Glycyl lysine isopeptide (Lys-Gly) (interchain with G-Cter in SUMO2) linkage. S351 bears the Phosphoserine mark. The interval 370–495 is winged-helix like domain; that stretch reads LGINEISSSF…FCKENEDSSD (126 aa). K469 participates in a covalent cross-link: Glycyl lysine isopeptide (Lys-Gly) (interchain with G-Cter in SUMO2). A Glycyl lysine isopeptide (Lys-Gly) (interchain with G-Cter in SUMO1); alternate cross-link involves residue K488. A Glycyl lysine isopeptide (Lys-Gly) (interchain with G-Cter in SUMO2); alternate cross-link involves residue K488. 2 disordered regions span residues 663 to 758 and 1015 to 1036; these read QAQA…SSGV and HAAD…PAGT. Residues 700 to 713 show a composition bias toward low complexity; it reads PSEQSQMSLSDSSM. The span at 726–737 shows a compositional bias: pro residues; that stretch reads PALPTPISPPPV. Positions 741–758 are enriched in polar residues; that stretch reads NRSGSSTVSEPAQSSSGV. The span at 1016–1034 shows a compositional bias: low complexity; sequence AADSPAKAPSASVPSSAPA. S1019 carries the phosphoserine modification. An N6-acetyllysine modification is found at K1234. At S1288 the chain carries Phosphoserine.

The protein belongs to the NFRKB family. As to quaternary structure, component of the chromatin remodeling INO80 complex; specifically part of a complex module associated with the N-terminus of INO80. Interacts with UCHL5.

Its subcellular location is the nucleus. Binds to the DNA consensus sequence 5'-GGGGAATCTCC-3'. Functionally, putative regulatory component of the chromatin remodeling INO80 complex which is involved in transcriptional regulation, DNA replication and probably DNA repair. Modulates the deubiquitinase activity of UCHL5 in the INO80 complex. This chain is Nuclear factor related to kappa-B-binding protein (Nfrkb), found in Mus musculus (Mouse).